The primary structure comprises 155 residues: RNA pyrophosphohydrolase (155 aa).

One can recognise a Nudix hydrolase domain in the interval 6-148 (GYRANVAIVL…KQEVYRKALT (143 aa)). The Nudix box signature appears at 38–59 (GGVDTGETPLQAMYRELHEEIG).

The protein belongs to the Nudix hydrolase family. RppH subfamily. It depends on a divalent metal cation as a cofactor.

Accelerates the degradation of transcripts by removing pyrophosphate from the 5'-end of triphosphorylated RNA, leading to a more labile monophosphorylated state that can stimulate subsequent ribonuclease cleavage. The sequence is that of RNA pyrophosphohydrolase from Francisella tularensis subsp. mediasiatica (strain FSC147).